The following is a 291-amino-acid chain: 33 kDa chaperonin (291 aa).

Intrachain disulfides connect cysteine 229-cysteine 231 and cysteine 262-cysteine 265.

Belongs to the HSP33 family. In terms of processing, under oxidizing conditions two disulfide bonds are formed involving the reactive cysteines. Under reducing conditions zinc is bound to the reactive cysteines and the protein is inactive.

It localises to the cytoplasm. In terms of biological role, redox regulated molecular chaperone. Protects both thermally unfolding and oxidatively damaged proteins from irreversible aggregation. Plays an important role in the bacterial defense system toward oxidative stress. The sequence is that of 33 kDa chaperonin from Vibrio vulnificus (strain YJ016).